The following is a 278-amino-acid chain: Large ribosomal subunit protein uL2 (278 aa).

The tract at residues 223 to 278 (GVAMNPIDHPHGGGEGRTSGGRHPVTPWGFPTKGKKTRSNKRTDTFIVSSRHNRKK) is disordered.

Belongs to the universal ribosomal protein uL2 family. In terms of assembly, part of the 50S ribosomal subunit. Forms a bridge to the 30S subunit in the 70S ribosome.

One of the primary rRNA binding proteins. Required for association of the 30S and 50S subunits to form the 70S ribosome, for tRNA binding and peptide bond formation. It has been suggested to have peptidyltransferase activity; this is somewhat controversial. Makes several contacts with the 16S rRNA in the 70S ribosome. The sequence is that of Large ribosomal subunit protein uL2 from Methylobacterium nodulans (strain LMG 21967 / CNCM I-2342 / ORS 2060).